A 253-amino-acid chain; its full sequence is MEAEGLGWLLVPLHQLVSWGAAGAMVFGGVVPYIPQYRDIRRTQNAEGFSTYVCLVLLVANILRILFWFGRHFESPLLWQSVVMILTMLLMLKLCTEVRVANELNLKRRVFSDFDPHHFWHWSSFADYVQCVLAFTGVAGYITYLSIDSALFVETLGFLAVLTEAMLGVPQLYRNHRHQSTEGMSIKMVLMWTSGDTFKTAYFLLNGAPLQFSVCGLLQVLVDLAILGQAYVFTRYPLKPAPHAAHPASAKAL.

The next 6 membrane-spanning stretches (helical) occupy residues 7–27, 49–69, 72–92, 125–145, 150–170, and 214–234; these read GWLL…AMVF, FSTY…LFWF, HFES…LLML, FADY…ITYL, ALFV…LGVP, and VCGL…YVFT. In terms of domain architecture, PQ-loop 1 spans 14 to 80; that stretch reads HQLVSWGAAG…RHFESPLLWQ (67 aa). The PQ-loop 2 domain occupies 160–215; that stretch reads AVLTEAMLGVPQLYRNHRHQSTEGMSIKMVLMWTSGDTFKTAYFLLNGAPLQFSVC.

It localises to the membrane. The sequence is that of Solute carrier family 66 member 2 (SLC66A2) from Bos taurus (Bovine).